Reading from the N-terminus, the 120-residue chain is Small ribosomal subunit protein bS6 (120 aa).

Residues 93–120 are disordered; it reads KKADTAPSSMMKTVEREEARKASQTEQA. The segment covering 105 to 120 has biased composition (basic and acidic residues); it reads TVEREEARKASQTEQA.

The protein belongs to the bacterial ribosomal protein bS6 family.

Binds together with bS18 to 16S ribosomal RNA. This chain is Small ribosomal subunit protein bS6, found in Delftia acidovorans (strain DSM 14801 / SPH-1).